Reading from the N-terminus, the 347-residue chain is UPF0284 protein M1627_0030 (347 aa).

Belongs to the UPF0284 family.

This is UPF0284 protein M1627_0030 from Saccharolobus islandicus (strain M.16.27) (Sulfolobus islandicus).